A 243-amino-acid chain; its full sequence is I/6 autoantigen (243 aa).

One can recognise an EF-hand domain in the interval Leu-110–Arg-145. The interval Pro-166 to Cys-243 is disordered. A compositionally biased stretch (basic residues) spans Pro-176–Gln-196. Tandem repeats lie at residues Arg-181–Gln-188, Gly-189–Gln-196, Arg-197–Gln-204, Arg-205–Gln-212, Arg-213–Gln-220, and Lys-221–Gly-228. Positions Arg-181 to Gly-228 are 6 X 8 AA tandem repeats. Positions Gln-198–Gln-220 are enriched in basic and acidic residues.

It is found in the cytoplasm. The protein resides in the cytoskeleton. In terms of biological role, microtubule-associated protein that may be involved in cross-linking microtubules. This is I/6 autoantigen from Trypanosoma brucei brucei.